The sequence spans 113 residues: Large ribosomal subunit protein bL17 (113 aa).

Belongs to the bacterial ribosomal protein bL17 family. Part of the 50S ribosomal subunit. Contacts protein L32.

The protein is Large ribosomal subunit protein bL17 of Caldicellulosiruptor saccharolyticus (strain ATCC 43494 / DSM 8903 / Tp8T 6331).